Reading from the N-terminus, the 358-residue chain is Methionine import ATP-binding protein MetN (358 aa).

The region spanning 14–255 is the ABC transporter domain; the sequence is VVFDAVSKRF…SRHETTRALL (242 aa). 52-59 serves as a coordination point for ATP; the sequence is GRSGAGKS.

This sequence belongs to the ABC transporter superfamily. Methionine importer (TC 3.A.1.24) family. The complex is composed of two ATP-binding proteins (MetN), two transmembrane proteins (MetI) and a solute-binding protein (MetQ).

It localises to the cell inner membrane. It carries out the reaction L-methionine(out) + ATP + H2O = L-methionine(in) + ADP + phosphate + H(+). It catalyses the reaction D-methionine(out) + ATP + H2O = D-methionine(in) + ADP + phosphate + H(+). Functionally, part of the ABC transporter complex MetNIQ involved in methionine import. Responsible for energy coupling to the transport system. The chain is Methionine import ATP-binding protein MetN from Rhizobium meliloti (strain 1021) (Ensifer meliloti).